Reading from the N-terminus, the 702-residue chain is Ribosomal RNA large subunit methyltransferase K/L (702 aa).

Residues 43-154 form the THUMP domain; that stretch reads LVYQSLMWSR…KETASIALDL (112 aa).

Belongs to the methyltransferase superfamily. RlmKL family.

It is found in the cytoplasm. It carries out the reaction guanosine(2445) in 23S rRNA + S-adenosyl-L-methionine = N(2)-methylguanosine(2445) in 23S rRNA + S-adenosyl-L-homocysteine + H(+). The catalysed reaction is guanosine(2069) in 23S rRNA + S-adenosyl-L-methionine = N(2)-methylguanosine(2069) in 23S rRNA + S-adenosyl-L-homocysteine + H(+). Its function is as follows. Specifically methylates the guanine in position 2445 (m2G2445) and the guanine in position 2069 (m7G2069) of 23S rRNA. This is Ribosomal RNA large subunit methyltransferase K/L from Shigella dysenteriae serotype 1 (strain Sd197).